The chain runs to 153 residues: Histone H2B.4 (153 aa).

Basic and acidic residues-rich tracts occupy residues 1-28 (MAPK…EKAP) and 36-53 (EKRL…EGKK). The segment at 1–61 (MAPKAEKKPA…KKAGRKKAKK (61 aa)) is disordered. Lys7 and Lys37 each carry N6-acetyllysine. Lys149 is covalently cross-linked (Glycyl lysine isopeptide (Lys-Gly) (interchain with G-Cter in ubiquitin)).

This sequence belongs to the histone H2B family. The nucleosome is a histone octamer containing two molecules each of H2A, H2B, H3 and H4 assembled in one H3-H4 heterotetramer and two H2A-H2B heterodimers. The octamer wraps approximately 147 bp of DNA. Post-translationally, can be acetylated to form H2BK6ac and H2BK33ac. In terms of processing, monoubiquitinated by BRE1 to form H2BK143ub1 and deubiquitinated by UBP26. Required for heterochromatic histone H3 di- and trimethylation at H3K4me. May give a specific tag for epigenetic transcriptional activation.

It localises to the nucleus. The protein localises to the chromosome. Functionally, core component of nucleosome. Nucleosomes wrap and compact DNA into chromatin, limiting DNA accessibility to the cellular machineries which require DNA as a template. Histones thereby play a central role in transcription regulation, DNA repair, DNA replication and chromosomal stability. DNA accessibility is regulated via a complex set of post-translational modifications of histones, also called histone code, and nucleosome remodeling. In Oryza sativa subsp. indica (Rice), this protein is Histone H2B.4 (H2B.4).